The sequence spans 844 residues: Janus kinase and microtubule-interacting protein 3 (844 aa).

The stretch at S8–H259 forms a coiled coil. The disordered stretch occupies residues Q249–K290. Over residues K254–L267 the composition is skewed to basic and acidic residues. Over residues A270–S282 the composition is skewed to low complexity. Residues E289–A421 are a coiled coil. Phosphoserine is present on S384. Polar residues predominate over residues S466–C483. The tract at residues S466 to D488 is disordered. 2 coiled-coil regions span residues M493–K621 and E688–F833.

Belongs to the JAKMIP family.

The protein localises to the golgi apparatus. This Mus musculus (Mouse) protein is Janus kinase and microtubule-interacting protein 3 (Jakmip3).